We begin with the raw amino-acid sequence, 147 residues long: UPF0306 protein YhbP (147 aa).

It belongs to the UPF0306 family.

In Escherichia coli O17:K52:H18 (strain UMN026 / ExPEC), this protein is UPF0306 protein YhbP.